A 901-amino-acid polypeptide reads, in one-letter code: Cyanophycin synthetase (901 aa).

An ATP-grasp domain is found at 224–478; the sequence is KRILAASGVP…VAGAVMDMLF (255 aa). 493–499 is an ATP binding site; it reads GTNGKTT.

It in the C-terminal section; belongs to the MurCDEF family. As to quaternary structure, homodimer.

It catalyses the reaction [L-4-(L-arginin-2-N-yl)aspartate](n) + L-aspartate + ATP = [L-4-(L-arginin-2-N-yl)aspartate](n)-L-aspartate + ADP + phosphate + H(+). The enzyme catalyses [L-4-(L-arginin-2-N-yl)aspartate](n)-L-aspartate + L-arginine + ATP = [L-4-(L-arginin-2-N-yl)aspartate](n+1) + ADP + phosphate + H(+). Functionally, catalyzes the ATP-dependent polymerization of arginine and aspartate to multi-L-arginyl-poly-L-aspartic acid (cyanophycin; a water-insoluble reserve polymer). The polypeptide is Cyanophycin synthetase (cphA) (Trichormus variabilis (strain ATCC 29413 / PCC 7937) (Anabaena variabilis)).